The following is a 793-amino-acid chain: Pentatricopeptide repeat-containing protein At1g03100, mitochondrial (793 aa).

Residues 1 to 87 (MFSLRKTKLQ…REAISSISGS (87 aa)) constitute a mitochondrion transit peptide. PPR repeat units follow at residues 257–291 (NTQVLNVALAGCLLFGTTRKAEQLLDMIPKIGVKA), 292–322 (DANLLVIMAHIYERNGRREELRKLQRHIDEA), 330–364 (FWQFYNCLLMCHLKFGDLESASKMVLEMLRRGKVA), 458–492 (TEEIYVKLAKAFLESGKMKELAKFLLKAEHEDSPV), 495–529 (DNSMLINVINACISLGMLDQAHDLLDEMRMAGVRT), 530–564 (GSSVYSSLLKAYCNTNQTREVTSLLRDAQKAGIQL), 565–599 (DSSCYEALIQSQVIQNDTHGALNVFKEMKEAKILR), 601–631 (GNQKFEKLLKGCEGNAEAGLMSKLLREIREV), 637–671 (GVHDWNNVIHFFSKKGLMQDAEKALKRMRSLGHSP), 672–707 (NAQTFHSMVTGYAAIGSKYTEVTELWGEMKSIAAAT), and 713–747 (DQELLDAVLYTFVRGGFFSRANEVVEMMEKKNMFV).

It belongs to the PPR family. P subfamily.

The protein resides in the mitochondrion. In Arabidopsis thaliana (Mouse-ear cress), this protein is Pentatricopeptide repeat-containing protein At1g03100, mitochondrial.